The primary structure comprises 269 residues: Tryptophan synthase alpha chain (269 aa).

Catalysis depends on proton acceptor residues Glu49 and Asp60.

It belongs to the TrpA family. As to quaternary structure, tetramer of two alpha and two beta chains.

It catalyses the reaction (1S,2R)-1-C-(indol-3-yl)glycerol 3-phosphate + L-serine = D-glyceraldehyde 3-phosphate + L-tryptophan + H2O. The protein operates within amino-acid biosynthesis; L-tryptophan biosynthesis; L-tryptophan from chorismate: step 5/5. Its function is as follows. The alpha subunit is responsible for the aldol cleavage of indoleglycerol phosphate to indole and glyceraldehyde 3-phosphate. This Histophilus somni (strain 2336) (Haemophilus somnus) protein is Tryptophan synthase alpha chain.